Consider the following 262-residue polypeptide: Snake venom serine proteinase 1 (262 aa).

An N-terminal signal peptide occupies residues 1-18; that stretch reads MVLIRVLANLLILQLSYA. A propeptide spanning residues 19–24 is cleaved from the precursor; sequence QKSSEL. One can recognise a Peptidase S1 domain in the interval 25 to 253; that stretch reads VIGGDECNIN…HLDWIQSIIA (229 aa). 5 disulfide bridges follow: Cys31/Cys165, Cys52/Cys68, Cys144/Cys214, Cys176/Cys193, and Cys204/Cys229. His67 (charge relay system) is an active-site residue. Residue Asn105 is glycosylated (N-linked (GlcNAc...) asparagine). Asp112 serves as the catalytic Charge relay system. Ser208 serves as the catalytic Charge relay system.

Belongs to the peptidase S1 family. Snake venom subfamily. Monomer. In terms of tissue distribution, expressed by the venom gland.

Its subcellular location is the secreted. In terms of biological role, snake venom serine protease that may act in the hemostasis system of the prey. This is Snake venom serine proteinase 1 from Crotalus adamanteus (Eastern diamondback rattlesnake).